The chain runs to 176 residues: RNA pyrophosphohydrolase (176 aa).

A Nudix hydrolase domain is found at 6–149; sequence GYRPNVGIII…KRNVYEMALT (144 aa). A Nudix box motif is present at residues 38–59; the sequence is GGIKPGESPEAAMYRELMEEVG.

This sequence belongs to the Nudix hydrolase family. RppH subfamily. It depends on a divalent metal cation as a cofactor.

Functionally, accelerates the degradation of transcripts by removing pyrophosphate from the 5'-end of triphosphorylated RNA, leading to a more labile monophosphorylated state that can stimulate subsequent ribonuclease cleavage. The sequence is that of RNA pyrophosphohydrolase from Laribacter hongkongensis (strain HLHK9).